A 212-amino-acid chain; its full sequence is MPIHEIRHPLIRHKLGLMRRADISTKSFRELAQEVGALLTYEATKDLPLENYRIEGWCGPVEVEKIAGKKITVVPILRAGIGMLDGVLRLIPNAKVSVVGLSRDEETLVAHTYVEKLVGEIDQRLALIVDPMLATGGSMAATVDMLKKAGCKEIRALVLVAAPEGIRLLERTHPDVTIYTAAIDQRLNENGYIIPGLGDAGDKVFGTKQKPS.

5-phospho-alpha-D-ribose 1-diphosphate contacts are provided by residues Arg-78, Arg-103, and 130–138; that span reads DPMLATGGS. Residues Ile-193 and 198–200 each bind uracil; that span reads GDA. Asp-199 contacts 5-phospho-alpha-D-ribose 1-diphosphate.

This sequence belongs to the UPRTase family. Requires Mg(2+) as cofactor.

The catalysed reaction is UMP + diphosphate = 5-phospho-alpha-D-ribose 1-diphosphate + uracil. It functions in the pathway pyrimidine metabolism; UMP biosynthesis via salvage pathway; UMP from uracil: step 1/1. Allosterically activated by GTP. Catalyzes the conversion of uracil and 5-phospho-alpha-D-ribose 1-diphosphate (PRPP) to UMP and diphosphate. In Azotobacter vinelandii (strain DJ / ATCC BAA-1303), this protein is Uracil phosphoribosyltransferase.